Reading from the N-terminus, the 121-residue chain is Large ribosomal subunit protein uL18 (121 aa).

It belongs to the universal ribosomal protein uL18 family. In terms of assembly, part of the 50S ribosomal subunit; part of the 5S rRNA/L5/L18/L25 subcomplex. Contacts the 5S and 23S rRNAs.

In terms of biological role, this is one of the proteins that bind and probably mediate the attachment of the 5S RNA into the large ribosomal subunit, where it forms part of the central protuberance. The chain is Large ribosomal subunit protein uL18 from Geobacter metallireducens (strain ATCC 53774 / DSM 7210 / GS-15).